A 237-amino-acid polypeptide reads, in one-letter code: Ribonuclease PH (237 aa).

Residues Arg86 and 124-126 (GTR) each bind phosphate.

The protein belongs to the RNase PH family. In terms of assembly, homohexameric ring arranged as a trimer of dimers.

The enzyme catalyses tRNA(n+1) + phosphate = tRNA(n) + a ribonucleoside 5'-diphosphate. Phosphorolytic 3'-5' exoribonuclease that plays an important role in tRNA 3'-end maturation. Removes nucleotide residues following the 3'-CCA terminus of tRNAs; can also add nucleotides to the ends of RNA molecules by using nucleoside diphosphates as substrates, but this may not be physiologically important. Probably plays a role in initiation of 16S rRNA degradation (leading to ribosome degradation) during starvation. The sequence is that of Ribonuclease PH from Xanthobacter autotrophicus (strain ATCC BAA-1158 / Py2).